The chain runs to 2793 residues: Serine/threonine-protein kinase tel1 (2793 aa).

The FAT domain occupies 1734 to 2334; that stretch reads VASSAASRCR…MYQIFASSKS (601 aa). The 313-residue stretch at 2438-2750 folds into the PI3K/PI4K catalytic domain; it reads YLPDFTVASG…PTNEPSEADR (313 aa). The segment at 2444-2450 is G-loop; it reads VASGVSA. The segment at 2616–2624 is catalytic loop; that stretch reads GLGDRHGHN. The segment at 2636-2660 is activation loop; sequence HIDLGVAFEQGRVLPVPEVVPFRLT. A disordered region spans residues 2718–2748; the sequence is KMQEQDTSDGPPVLPGSTTDQQRPTNEPSEA. Residues 2733-2745 show a composition bias toward polar residues; the sequence is GSTTDQQRPTNEP. The FATC domain occupies 2761 to 2793; that stretch reads KTLSVTATVNELIQQATDEKNLAVLYCGWAAYA.

This sequence belongs to the PI3/PI4-kinase family. ATM subfamily. Associates with DNA double-strand breaks.

It localises to the nucleus. The protein localises to the chromosome. The protein resides in the telomere. It catalyses the reaction L-seryl-[protein] + ATP = O-phospho-L-seryl-[protein] + ADP + H(+). The catalysed reaction is L-threonyl-[protein] + ATP = O-phospho-L-threonyl-[protein] + ADP + H(+). In terms of biological role, serine/threonine protein kinase which activates checkpoint signaling upon genotoxic stresses such as ionizing radiation (IR), ultraviolet light (UV), or DNA replication stalling, thereby acting as a DNA damage sensor. Recognizes the substrate consensus sequence [ST]-Q. Phosphorylates histone H2A to form H2AS128ph (gamma-H2A) at sites of DNA damage, involved in the regulation of DNA damage response mechanism. Required for the control of telomere length and genome stability. This Emericella nidulans (strain FGSC A4 / ATCC 38163 / CBS 112.46 / NRRL 194 / M139) (Aspergillus nidulans) protein is Serine/threonine-protein kinase tel1 (tel1).